The chain runs to 175 residues: Transcriptional repressor NrdR (175 aa).

Residues 3–32 fold into a zinc finger; it reads CPYCSHPDSKVIDSRDVDDGVRRRRECVVC. In terms of domain architecture, ATP-cone spans 47–137; the sequence is LFVVKKDQRR…VYREFTDITQ (91 aa).

It belongs to the NrdR family. The cofactor is Zn(2+).

Its function is as follows. Negatively regulates transcription of bacterial ribonucleotide reductase nrd genes and operons by binding to NrdR-boxes. This chain is Transcriptional repressor NrdR, found in Dehalococcoides mccartyi (strain CBDB1).